The sequence spans 297 residues: Guanylate kinase (297 aa).

Residues 4-183 (GKMIIISGPS…AVAKITDVLH (180 aa)) enclose the Guanylate kinase-like domain. ATP is bound at residue 11–18 (GPSGVGKG). The tract at residues 204 to 297 (EQIVKEKYMY…EQKHYNNDEF (94 aa)) is unknown.

Belongs to the guanylate kinase family.

It localises to the cytoplasm. The catalysed reaction is GMP + ATP = GDP + ADP. Its function is as follows. Essential for recycling GMP and indirectly, cGMP. The chain is Guanylate kinase (gmk) from Mycoplasma capricolum subsp. capricolum (strain California kid / ATCC 27343 / NCTC 10154).